The chain runs to 383 residues: L-lactate dehydrogenase (383 aa).

Residues 1–380 (MIISSGNDYR…NADCLVQAIK (380 aa)) enclose the FMN hydroxy acid dehydrogenase domain. Position 24 (tyrosine 24) interacts with substrate. Serine 106 and glutamine 127 together coordinate FMN. Tyrosine 129 serves as a coordination point for substrate. Threonine 155 serves as a coordination point for FMN. Residue arginine 164 coordinates substrate. Lysine 251 lines the FMN pocket. Histidine 275 (proton acceptor) is an active-site residue. Arginine 278 lines the substrate pocket. 306-330 (DSGIRNGLDVVRMLALGADTVLLGR) provides a ligand contact to FMN.

The protein belongs to the FMN-dependent alpha-hydroxy acid dehydrogenase family. The cofactor is FMN.

Its subcellular location is the cell inner membrane. The catalysed reaction is (S)-lactate + A = pyruvate + AH2. Functionally, catalyzes the conversion of L-lactate to pyruvate. Is coupled to the respiratory chain. This is L-lactate dehydrogenase from Acinetobacter baumannii (strain AB307-0294).